A 341-amino-acid chain; its full sequence is tRNA N6-adenosine threonylcarbamoyltransferase (341 aa).

Fe cation-binding residues include H115 and H119. Substrate is bound by residues 137 to 141 (IVSGG), D170, G183, D187, and N276. D304 is a binding site for Fe cation.

It belongs to the KAE1 / TsaD family. The cofactor is Fe(2+).

Its subcellular location is the cytoplasm. The catalysed reaction is L-threonylcarbamoyladenylate + adenosine(37) in tRNA = N(6)-L-threonylcarbamoyladenosine(37) in tRNA + AMP + H(+). Required for the formation of a threonylcarbamoyl group on adenosine at position 37 (t(6)A37) in tRNAs that read codons beginning with adenine. Is involved in the transfer of the threonylcarbamoyl moiety of threonylcarbamoyl-AMP (TC-AMP) to the N6 group of A37, together with TsaE and TsaB. TsaD likely plays a direct catalytic role in this reaction. This is tRNA N6-adenosine threonylcarbamoyltransferase from Staphylococcus aureus (strain USA300).